We begin with the raw amino-acid sequence, 139 residues long: MVEERLNELELELVNIEYRKENKEQFLRVFIDKDNGVDLDMCSQANRAIKESFDEQEIPYDYLEVSSPGLDRVLKKERDWERFSGYRVRIKTRKSFPGPQRITGILLGFDSENIAVELEGELLKVPREMITIIRLHPEF.

Belongs to the RimP family.

The protein resides in the cytoplasm. Required for maturation of 30S ribosomal subunits. In Syntrophomonas wolfei subsp. wolfei (strain DSM 2245B / Goettingen), this protein is Ribosome maturation factor RimP.